Here is a 111-residue protein sequence, read N- to C-terminus: Secreted RxLR effector protein 82 (111 aa).

An N-terminal signal peptide occupies residues 1–17 (MFHLYLLLVFETRYTCL). The RxLR signature appears at 28–31 (RWLR).

This sequence belongs to the RxLR effector family.

The protein resides in the secreted. It localises to the host nucleus. Its function is as follows. Secreted effector that acts as an elicitor that induces cell death in host plant cells. The protein is Secreted RxLR effector protein 82 of Plasmopara viticola (Downy mildew of grapevine).